Consider the following 282-residue polypeptide: Bifunctional protein FolD (282 aa).

NADP(+)-binding positions include 164 to 166 (GAS), Ile-189, and Ile-230.

It belongs to the tetrahydrofolate dehydrogenase/cyclohydrolase family. In terms of assembly, homodimer.

It carries out the reaction (6R)-5,10-methylene-5,6,7,8-tetrahydrofolate + NADP(+) = (6R)-5,10-methenyltetrahydrofolate + NADPH. The enzyme catalyses (6R)-5,10-methenyltetrahydrofolate + H2O = (6R)-10-formyltetrahydrofolate + H(+). It functions in the pathway one-carbon metabolism; tetrahydrofolate interconversion. In terms of biological role, catalyzes the oxidation of 5,10-methylenetetrahydrofolate to 5,10-methenyltetrahydrofolate and then the hydrolysis of 5,10-methenyltetrahydrofolate to 10-formyltetrahydrofolate. The chain is Bifunctional protein FolD from Campylobacter jejuni subsp. jejuni serotype O:2 (strain ATCC 700819 / NCTC 11168).